We begin with the raw amino-acid sequence, 129 residues long: Small ribosomal subunit protein uS11 (129 aa).

The protein belongs to the universal ribosomal protein uS11 family. Part of the 30S ribosomal subunit. Interacts with proteins S7 and S18. Binds to IF-3.

In terms of biological role, located on the platform of the 30S subunit, it bridges several disparate RNA helices of the 16S rRNA. Forms part of the Shine-Dalgarno cleft in the 70S ribosome. This chain is Small ribosomal subunit protein uS11, found in Pseudomonas fluorescens (strain SBW25).